A 333-amino-acid chain; its full sequence is Homeobox protein engrailed-2 (333 aa).

Disordered regions lie at residues 1 to 49 (MEEN…RALM), 95 to 206 (GRGG…GANL), and 223 to 250 (SDRPSSGPRSRKPKKKNPNKEDKRPRTA). Composition is skewed to gly residues over residues 25–36 (PGGGSGGGGGSS) and 95–117 (GRGGGAGGEGGASGAEGGGGAGG). 2 stretches are compositionally biased toward low complexity: residues 142–151 (PLPAAGSDSP) and 191–200 (LSVSSDSDSS). The segment at residues 244–303 (DKRPRTAFTAEQLQRLKAEFQTNRYLTEQRRQSLAQELSLNESQIKIWFQNKRAKIKKAT) is a DNA-binding region (homeobox).

Belongs to the engrailed homeobox family.

It is found in the nucleus. This Homo sapiens (Human) protein is Homeobox protein engrailed-2 (EN2).